Consider the following 169-residue polypeptide: Probable RNA-binding protein EIF1AD (169 aa).

One can recognise an S1-like domain in the interval 14–89 (VLGDYVQPTE…VKAEIAFILY (76 aa)). Positions 115-169 (AKEKESSGIQSTEAQAKPQGEDSETDDDSGLFVNTNHVHYEDSEEESESEEDEEN) are disordered. Positions 156 to 169 (DSEEESESEEDEEN) are enriched in acidic residues.

It belongs to the EIF1AD family.

The protein localises to the nucleus. May play a role into cellular response to oxidative stress. May decrease cell proliferation. The polypeptide is Probable RNA-binding protein EIF1AD (eif1ad) (Xenopus laevis (African clawed frog)).